Consider the following 141-residue polypeptide: Nucleoside diphosphate kinase (141 aa).

K9, F57, R85, T91, R102, and N112 together coordinate ATP. Residue H115 is the Pros-phosphohistidine intermediate of the active site.

It belongs to the NDK family. Homotetramer. Mg(2+) is required as a cofactor.

Its subcellular location is the cytoplasm. It catalyses the reaction a 2'-deoxyribonucleoside 5'-diphosphate + ATP = a 2'-deoxyribonucleoside 5'-triphosphate + ADP. The enzyme catalyses a ribonucleoside 5'-diphosphate + ATP = a ribonucleoside 5'-triphosphate + ADP. Functionally, major role in the synthesis of nucleoside triphosphates other than ATP. The ATP gamma phosphate is transferred to the NDP beta phosphate via a ping-pong mechanism, using a phosphorylated active-site intermediate. The sequence is that of Nucleoside diphosphate kinase from Chlamydia felis (strain Fe/C-56) (Chlamydophila felis).